The following is a 384-amino-acid chain: UDP-N-acetylglucosamine--N-acetylmuramyl-(pentapeptide) pyrophosphoryl-undecaprenol N-acetylglucosamine transferase (384 aa).

UDP-N-acetyl-alpha-D-glucosamine contacts are provided by residues 22–24 (TGG), arginine 179, serine 209, and glutamine 312.

It belongs to the glycosyltransferase 28 family. MurG subfamily.

The protein localises to the cell inner membrane. It carries out the reaction di-trans,octa-cis-undecaprenyl diphospho-N-acetyl-alpha-D-muramoyl-L-alanyl-D-glutamyl-meso-2,6-diaminopimeloyl-D-alanyl-D-alanine + UDP-N-acetyl-alpha-D-glucosamine = di-trans,octa-cis-undecaprenyl diphospho-[N-acetyl-alpha-D-glucosaminyl-(1-&gt;4)]-N-acetyl-alpha-D-muramoyl-L-alanyl-D-glutamyl-meso-2,6-diaminopimeloyl-D-alanyl-D-alanine + UDP + H(+). It participates in cell wall biogenesis; peptidoglycan biosynthesis. In terms of biological role, cell wall formation. Catalyzes the transfer of a GlcNAc subunit on undecaprenyl-pyrophosphoryl-MurNAc-pentapeptide (lipid intermediate I) to form undecaprenyl-pyrophosphoryl-MurNAc-(pentapeptide)GlcNAc (lipid intermediate II). The sequence is that of UDP-N-acetylglucosamine--N-acetylmuramyl-(pentapeptide) pyrophosphoryl-undecaprenol N-acetylglucosamine transferase from Treponema pallidum (strain Nichols).